A 446-amino-acid chain; its full sequence is Tubulin beta chain (446 aa).

Positions 11, 69, 138, 142, 143, 144, 204, and 226 each coordinate GTP. Residue Glu-69 participates in Mg(2+) binding. The tract at residues 421 to 446 is disordered; that stretch reads EYQQYQDAGIDEEEEEYEEELPEGEE. A compositionally biased stretch (acidic residues) spans 429 to 446; the sequence is GIDEEEEEYEEELPEGEE.

This sequence belongs to the tubulin family. In terms of assembly, dimer of alpha and beta chains. A typical microtubule is a hollow water-filled tube with an outer diameter of 25 nm and an inner diameter of 15 nM. Alpha-beta heterodimers associate head-to-tail to form protofilaments running lengthwise along the microtubule wall with the beta-tubulin subunit facing the microtubule plus end conferring a structural polarity. Microtubules usually have 13 protofilaments but different protofilament numbers can be found in some organisms and specialized cells. The cofactor is Mg(2+).

The protein localises to the cytoplasm. It is found in the cytoskeleton. Its function is as follows. Tubulin is the major constituent of microtubules, a cylinder consisting of laterally associated linear protofilaments composed of alpha- and beta-tubulin heterodimers. Microtubules grow by the addition of GTP-tubulin dimers to the microtubule end, where a stabilizing cap forms. Below the cap, tubulin dimers are in GDP-bound state, owing to GTPase activity of alpha-tubulin. The sequence is that of Tubulin beta chain (TUB2) from Fusarium fujikuroi (Bakanae and foot rot disease fungus).